The sequence spans 5193 residues: Usherin (5193 aa).

Residues 1 to 34 (MHYLALSPGFLCYTIKTLILAYLASVLVLAASQG) form the signal peptide. Residues 35–5033 (VFPRLENVGA…KSTEFYSELW (4999 aa)) are Extracellular-facing. N-linked (GlcNAc...) asparagine glycans are attached at residues Asn-230, Asn-258, Asn-274, Asn-358, Asn-415, Asn-448, and Asn-469. Positions 268-514 (QDFRLYNVSL…AVDEIIVSGR (247 aa)) constitute a Laminin N-terminal domain. Intrachain disulfides connect Cys-515–Cys-524, Cys-517–Cys-533, Cys-535–Cys-546, Cys-549–Cys-569, Cys-572–Cys-581, Cys-574–Cys-602, Cys-605–Cys-614, Cys-617–Cys-635, Cys-638–Cys-652, Cys-640–Cys-659, Cys-661–Cys-670, Cys-673–Cys-688, Cys-691–Cys-705, Cys-693–Cys-712, Cys-714–Cys-723, Cys-726–Cys-741, Cys-744–Cys-756, Cys-746–Cys-763, Cys-765–Cys-774, Cys-777–Cys-789, Cys-792–Cys-805, Cys-794–Cys-812, Cys-814–Cys-823, and Cys-826–Cys-846. 10 Laminin EGF-like domains span residues 515-571 (CQCH…NCKP), 572-637 (CQCH…ACKL), 638-690 (CDCN…GCRP), 691-743 (CNCN…GCEP), 744-791 (CQCN…ACEV), 792-848 (CDCS…NCEK), 853-896 (NGSL…GCQA), 897-947 (CDCD…GCLP), 948-998 (CLCH…RCRP), and 999-1049 (CHCH…GCSK). The N-linked (GlcNAc...) asparagine glycan is linked to Asn-647. Asn-836 and Asn-853 each carry an N-linked (GlcNAc...) asparagine glycan. 14 disulfides stabilise this stretch: Cys-867–Cys-876, Cys-879–Cys-894, Cys-897–Cys-910, Cys-899–Cys-917, Cys-919–Cys-928, Cys-931–Cys-945, Cys-948–Cys-960, Cys-950–Cys-967, Cys-969–Cys-979, Cys-982–Cys-996, Cys-999–Cys-1011, Cys-1001–Cys-1018, Cys-1020–Cys-1029, and Cys-1032–Cys-1047. Asn-885 carries an N-linked (GlcNAc...) asparagine glycan. Asn-941 carries an N-linked (GlcNAc...) asparagine glycan. The N-linked (GlcNAc...) asparagine glycan is linked to Asn-1008. Fibronectin type-III domains follow at residues 1055-1143 (PPPR…TKPE), 1147-1241 (GHLN…APPQ), 1242-1357 (TQGP…SVPV), 1358-1462 (FMAP…AAPA), and 1463-1566 (QLRP…LQLK). 5 N-linked (GlcNAc...) asparagine glycosylation sites follow: Asn-1068, Asn-1089, Asn-1150, Asn-1171, and Asn-1222. 3 N-linked (GlcNAc...) asparagine glycosylation sites follow: Asn-1382, Asn-1473, and Asn-1626. Laminin G-like domains are found at residues 1511 to 1700 (TKGT…WEGC) and 1705 to 1882 (EEGV…QDGC). A disulfide bridge links Cys-1663 with Cys-1700. N-linked (GlcNAc...) asparagine glycosylation occurs at Asn-1770. 13 Fibronectin type-III domains span residues 1847 to 1946 (EPGF…TAPQ), 1948 to 2045 (VPTP…TPQE), 2046 to 2132 (APQE…TAQL), 2133 to 2234 (PPEQ…IPEG), 2235 to 2321 (VPAP…APPE), 2322 to 2421 (GVVN…SVEM), 2422 to 2525 (PPGA…DKPG), 2526 to 2613 (PIDA…TLPG), 2617 to 2713 (GIPS…TRPC), 2717 to 2810 (GVQP…THPA), 2811 to 2914 (PPQE…TLAG), 2918 to 3009 (RGAT…MWEE), and 3013 to 3103 (GMLP…TPSD). Cys-1853 and Cys-1882 are oxidised to a cystine. A glycan (N-linked (GlcNAc...) asparagine) is linked at Asn-1894. A disordered region spans residues 1931–1955 (VSSDWSRGRTLGTAPQSVPTPSRAQ). Residues 1943 to 1955 (TAPQSVPTPSRAQ) show a composition bias toward polar residues. N-linked (GlcNAc...) asparagine glycans are attached at residues Asn-1958, Asn-2095, Asn-2121, Asn-2177, Asn-2186, Asn-2249, Asn-2276, Asn-2313, Asn-2368, and Asn-2404. N-linked (GlcNAc...) asparagine glycans are attached at residues Asn-2575, Asn-2647, Asn-2701, Asn-2761, and Asn-2779. Residues Asn-2928, Asn-2998, Asn-3023, Asn-3090, Asn-3208, Asn-3322, and Asn-3411 are each glycosylated (N-linked (GlcNAc...) asparagine). 17 Fibronectin type-III domains span residues 3395–3489 (CPAT…TRED), 3490–3580 (VPEG…TTQR), 3581–3671 (SPEN…TLQA), 3672–3766 (APQG…TPED), 3769–3857 (PPCN…TLEA), 3858–3955 (APVG…TLEA), 3956–4059 (PPRG…SAPS), 4060–4148 (GLMN…APPD), 4149–4256 (TQMA…APPD), 4257–4346 (GLSP…TPEV), 4347–4437 (PPSE…APPE), 4438–4522 (NMDP…TSPS), 4523–4625 (APSG…VPPL), 4628–4725 (PAPH…TGPA), 4726–4818 (PPEG…THPA), 4819–4921 (PPSG…TKKE), and 4922–5005 (MPQY…YDAA). Residues Asn-3589, Asn-3645, Asn-3686, Asn-3712, Asn-3723, and Asn-3772 are each glycosylated (N-linked (GlcNAc...) asparagine). N-linked (GlcNAc...) asparagine glycosylation is found at Asn-3976, Asn-4063, Asn-4194, Asn-4218, Asn-4304, Asn-4340, Asn-4365, and Asn-4410. Asn-4556, Asn-4575, Asn-4683, Asn-4716, Asn-4746, Asn-4756, Asn-4765, Asn-4915, and Asn-4934 each carry an N-linked (GlcNAc...) asparagine glycan. A helical membrane pass occupies residues 5034-5054 (FIMVMAVVGLILLAIFLSLIL). Residues 5055-5193 (QRKIHKEPCI…EHTAFTDTHL (139 aa)) are Cytoplasmic-facing. The short motif at 5191–5193 (THL) is the PDZ-binding element.

Interacts with collagen IV and fibronectin via its laminin EGF-like domains. Interaction with collagen may be required for stable integration into the basement membrane. Interacts with NINL. Interacts with USH1C. Component of USH2 complex, composed of ADGRV1, PDZD7, USH2A and WHRN. Interacts with ADGRV1/MASS1 (via N-terminal PDZ domain). Interacts (via the cytoplasmic region) with WHRN. Interacts (via the cytoplasmic region) with PDZD7. Interacts (via the cytoplasmic region) with VEZT and MYO7A (via MyTH4-FERM domains); the interaction associates VEZT with the USH2 complex at the stereocilia base. Present in the testis, epididymis, oviduct, spleen, submaxillary gland, and small and large intestines. Not detected in the brain, skin, lung, skeletal muscle, cardiac muscle, liver or kidney. Expressed in smooth muscle of the colon and the epididymis. Also present in select vascular basement membranes. In the cochlea, it is present in virtually every basement membrane. It is particularly high in the strial capillary basement membranes (SCBMs). In the retina, it is again expressed in all of the basement membranes. It is also very prevalent in the lens capsule and the Bruch's layer between the retinal pigment epithelium and the choroid layer, which is very rich in basement membranes. In neonates in it is widely expressed in the basement membranes of the cochlea. Present in the synaptic terminals of retinal photoreceptors (at protein level).

The protein resides in the cell projection. It localises to the stereocilium membrane. The protein localises to the photoreceptor inner segment. Its subcellular location is the secreted. Functionally, involved in hearing and vision as member of the USH2 complex. In the inner ear, required for the maintenance of hair bundle ankle formation, which connects growing stereocilia in developing cochlear hair cells. In retina photoreceptors, the USH2 complex is required for the maintenance of periciliary membrane complex that seems to play a role in regulating intracellular protein transport. In Mus musculus (Mouse), this protein is Usherin (Ush2A).